Consider the following 547-residue polypeptide: MNSKRDRFEKQLLIKNVFESKQLFLTILRFTVPTFFFALFSAAYVFIDQIMVIKFVPRSELNPDSIFTDQSLIDEFKNSAFYKSDSFLSSGLNIKQFIKTVLNISQPLIVLLNAINIFIPLGTGVIFSKAIGRNDQNKIQEAWNTGLISTTVFGLITQFLVLSFAKEWLHYNLDQSSFEQNFQANSFQQFFNKKAIDVASEYVYILIGLNIIPMLSRLFFYLAQSEGRQLFIAIVPPIANLINILIVFLLVRYSSLGVIGSAVAGILGYLINFLAYIIYLIYLNKRNLTYLTFKTIKLNKIDFNLLVVVSLIGMASFFRNGSLSIVTTFYESFLVNLTKATTDKNDVFYLTLLTGPIAISNLASAAIFGLLQGVRTVSSYKFGQKKYDEIKKINIYTVIICISFGSLIYLLTAVAFGKQILSSFFDVSDQNLDLANYFSLIVQAQVFFVATGANSQQYFQNTNRVLYSWIVSLTHGLFVFIPLLFIFQAITLQTNNIEVFIWLLTANAALAGLINIAFGQIHTNLFMDKYFANPPQNKLVKFIEKYS.

12 helical membrane passes run 33–53, 107–127, 145–165, 203–223, 231–251, 263–283, 298–318, 351–371, 397–417, 432–452, 470–490, and 499–519; these read PTFF…IMVI, PLIV…GVIF, TGLI…LSFA, VYIL…FYLA, FIAI…FLLV, VAGI…LIYL, LNKI…ASFF, TLLT…FGLL, TVII…VAFG, LDLA…VATG, IVSL…FQAI, and VFIW…IAFG.

It is found in the cell membrane. This is an uncharacterized protein from Mycoplasma genitalium (strain ATCC 33530 / DSM 19775 / NCTC 10195 / G37) (Mycoplasmoides genitalium).